Here is a 98-residue protein sequence, read N- to C-terminus: NADH-ubiquinone oxidoreductase chain 4L (98 aa).

Transmembrane regions (helical) follow at residues 1 to 21 (MTMV…GLLM), 29 to 49 (SLLC…VTIL), and 61 to 81 (IVLL…LVMV).

It belongs to the complex I subunit 4L family. Core subunit of respiratory chain NADH dehydrogenase (Complex I) which is composed of 45 different subunits.

The protein resides in the mitochondrion inner membrane. It carries out the reaction a ubiquinone + NADH + 5 H(+)(in) = a ubiquinol + NAD(+) + 4 H(+)(out). Functionally, core subunit of the mitochondrial membrane respiratory chain NADH dehydrogenase (Complex I) which catalyzes electron transfer from NADH through the respiratory chain, using ubiquinone as an electron acceptor. Part of the enzyme membrane arm which is embedded in the lipid bilayer and involved in proton translocation. This Monachus monachus (Mediterranean monk seal) protein is NADH-ubiquinone oxidoreductase chain 4L (MT-ND4L).